Reading from the N-terminus, the 539-residue chain is MLCVKGPPEQEPEDGALDVTRGCQCPLPTEDSILGQELLDCTRMNEDQSTDENGAGHFYSESPSQLREYLTQPSSEQTSSSESTVTSSESGSDILHMASGDLDCKPLCEKEEEARAASAMQGTSLAPAAYGDYTSVGVAKAASQLEAGEELRTTENGGKGSAPGETEISMPPKASVKLVNFQQSENTSANEKEVEAEFLRLSLGLKCDWFTLEKRVKLEERSRDLAEENLKKEITNCLKLLESLTPLCEEDNQAQEIVKKLEKSIVLLSQCTARVASRAEMLGAINQESRVSRAVEVMIQHVENLKRMYAKEHAELEDLKQALLQNDRSFNSLPDEDDCQIKKRSSSLNSKPSSLRRVTIASLPRNLGNVGLVSGMENNDRFSRRSSSWRILGTKQGEHRPSLHRFISTYSWADAEDERSDVKARDAPEPQGEEAVERTRKPSLSERRSSTLAWDRGTICSSVASWVTHLQASFRRANRALWLTGLIIILIAALMSFLTGQLFQTAVEAAPTQEGDSWLSLEHILWPFTRLGHDGPPPV.

3 disordered regions span residues 1–21 (MLCV…DVTR), 69–98 (YLTQ…LHMA), and 147–171 (AGEE…ISMP). The Cytoplasmic segment spans residues 1–479 (MLCVKGPPEQ…LQASFRRANR (479 aa)). The span at 74-92 (SSEQTSSSESTVTSSESGS) shows a compositional bias: low complexity. Threonine 78 is subject to Phosphothreonine. Residues 298 to 326 (MIQHVENLKRMYAKEHAELEDLKQALLQN) adopt a coiled-coil conformation. The disordered stretch occupies residues 334–353 (PDEDDCQIKKRSSSLNSKPS). Phosphoserine is present on residues serine 347, serine 354, and serine 408. The interval 418–449 (ERSDVKARDAPEPQGEEAVERTRKPSLSERRS) is disordered. The segment covering 435-449 (AVERTRKPSLSERRS) has biased composition (basic and acidic residues). Residues 480–500 (ALWLTGLIIILIAALMSFLTG) traverse the membrane as a helical; Anchor for type IV membrane protein segment. The Lumenal portion of the chain corresponds to 501–539 (QLFQTAVEAAPTQEGDSWLSLEHILWPFTRLGHDGPPPV).

This sequence belongs to the IRAG2 family. In terms of assembly, interacts (via coiled-coil domain) with ITPR3. Interacts with SUN1 and SUN2. Interacts with microtubules. Interacts with HCN4; regulates HCN4 channel activity. Post-translationally, the removal of the C-terminal lumenal domain occurs by proteolytic processing. In terms of tissue distribution, spleen and thymus. Expressed at high levels in pre B-cells, mature B-cells and pre T-cells. Expressed at low levels in mature T-cells and plasma B-cells. Expressed in circumvallate (CV), foliate (FL) and fungiform (FF) taste papillae cells of the tongue epithelium.

Its subcellular location is the cytoplasm. The protein localises to the endoplasmic reticulum membrane. It is found in the nucleus envelope. The protein resides in the cytoskeleton. It localises to the microtubule organizing center. Its subcellular location is the centrosome. The protein localises to the spindle pole. It is found in the chromosome. Plays a role in the delivery of peptides to major histocompatibility complex (MHC) class I molecules; this occurs in a transporter associated with antigen processing (TAP)-independent manner. May play a role in taste signal transduction via ITPR3. May play a role during fertilization in pronucleus congression and fusion. Plays a role in maintaining nuclear shape, maybe as a component of the LINC complex and through interaction with microtubules. Plays a role in the regulation of cellular excitability by regulating the hyperpolarization-activated cyclic nucleotide-gated HCN4 channel activity. This is Inositol 1,4,5-triphosphate receptor associated 2 (Irag2) from Mus musculus (Mouse).